The primary structure comprises 252 residues: Imidazole glycerol phosphate synthase subunit HisF (252 aa).

Residues D11 and D130 contribute to the active site.

It belongs to the HisA/HisF family. In terms of assembly, heterodimer of HisH and HisF.

The protein resides in the cytoplasm. It catalyses the reaction 5-[(5-phospho-1-deoxy-D-ribulos-1-ylimino)methylamino]-1-(5-phospho-beta-D-ribosyl)imidazole-4-carboxamide + L-glutamine = D-erythro-1-(imidazol-4-yl)glycerol 3-phosphate + 5-amino-1-(5-phospho-beta-D-ribosyl)imidazole-4-carboxamide + L-glutamate + H(+). The protein operates within amino-acid biosynthesis; L-histidine biosynthesis; L-histidine from 5-phospho-alpha-D-ribose 1-diphosphate: step 5/9. IGPS catalyzes the conversion of PRFAR and glutamine to IGP, AICAR and glutamate. The HisF subunit catalyzes the cyclization activity that produces IGP and AICAR from PRFAR using the ammonia provided by the HisH subunit. This Syntrophomonas wolfei subsp. wolfei (strain DSM 2245B / Goettingen) protein is Imidazole glycerol phosphate synthase subunit HisF.